Here is a 211-residue protein sequence, read N- to C-terminus: Protein-L-isoaspartate O-methyltransferase (211 aa).

The active site involves Ser-62.

The protein belongs to the methyltransferase superfamily. L-isoaspartyl/D-aspartyl protein methyltransferase family.

It localises to the cytoplasm. It catalyses the reaction [protein]-L-isoaspartate + S-adenosyl-L-methionine = [protein]-L-isoaspartate alpha-methyl ester + S-adenosyl-L-homocysteine. In terms of biological role, catalyzes the methyl esterification of L-isoaspartyl residues in peptides and proteins that result from spontaneous decomposition of normal L-aspartyl and L-asparaginyl residues. It plays a role in the repair and/or degradation of damaged proteins. The sequence is that of Protein-L-isoaspartate O-methyltransferase from Shewanella woodyi (strain ATCC 51908 / MS32).